A 632-amino-acid chain; its full sequence is Arginyl-tRNA--protein transferase 1 (632 aa).

Residues 1–18 are compositionally biased toward polar residues; it reads MSLKNDASSSHDGGSNRE. Disordered regions lie at residues 1–27, 113–144, 284–312, and 517–580; these read MSLK…HGRR, KLDV…AKSE, NGNI…HQAR, and PAAS…NDIN. Residues 113-122 show a composition bias toward basic and acidic residues; the sequence is KLDVQPREQR. Positions 285-296 are enriched in polar residues; it reads GNISRGANSLDG. A compositionally biased stretch (basic and acidic residues) spans 298 to 310; that stretch reads ETLHAKKDSENHQ. Over residues 538-563 the composition is skewed to acidic residues; that stretch reads SDEDEDEDEDDDDDDDDDEEMYETES. A compositionally biased stretch (basic and acidic residues) spans 564–578; the sequence is EDSHIESDPGSKDND.

The protein belongs to the R-transferase family.

It carries out the reaction an N-terminal L-alpha-aminoacyl-[protein] + L-arginyl-tRNA(Arg) = an N-terminal L-arginyl-L-aminoacyl-[protein] + tRNA(Arg) + H(+). Involved in the post-translational conjugation of arginine to the N-terminal aspartate or glutamate of a protein. This arginylation is required for degradation of the protein via the ubiquitin pathway. Component of the N-end rule pathway with ATE2 and PRT6. The N-end rule pathway regulates seed after-ripening, seedling sugar sensitivity, seedling lipid breakdown, and abscisic acid (ABA) sensitivity of germination. The end-rule pathway regulates various aspects of leaf and shoot development. Involved in the oxygen-dependent N-arginylation of RAP2-12, an activator of hypoxic gene expression. This N-terminal modification leads to ubiquitination by PRT6 and subsequent degradation of RAP2-12 under aerobic conditions. Has an important role in the progression of leaf senescence. Involved in disease resistance. The end-rule pathway plays a role in regulating the timing and amplitude of the immune response following infection with the bacterial pathogen Pseudomonas syringae pv tomato. Regulates the biosynthesis of plant-defense metabolites such as glucosinolates, and the biosynthesis and response to the phytohormone jasmonate (JA), which plays a key role in plant immunity. The protein is Arginyl-tRNA--protein transferase 1 of Arabidopsis thaliana (Mouse-ear cress).